Reading from the N-terminus, the 288-residue chain is MLQTSLTLPAPAKLNLFLHITGRRPDGYHNLQTVFQLLDFGDELTFTPNQSGEITITPAIEGVPLEQNLVYKAANILRSHVNRPELGATIHLTKRLPMGGGIGGGSSDAATTLVGLNYLWQTGVSPTTLAQLGRQLGADVPVFVEGNSAWAEGIGEQLIALDLPQYWYVVLTPACHVSTVEIFSHKDLTRDTLAITVAAFFEKGGKNDCQPLVERLFPQVRDAVDWLNKFGPAKLTGTGASVFAAFPSKDAAQKVFANKPKHLNGFVAQGVNESPLHQRLPEQCITGV.

The active site involves lysine 13. 97–107 (PMGGGIGGGSS) is an ATP binding site. Residue aspartate 139 is part of the active site.

The protein belongs to the GHMP kinase family. IspE subfamily.

It carries out the reaction 4-CDP-2-C-methyl-D-erythritol + ATP = 4-CDP-2-C-methyl-D-erythritol 2-phosphate + ADP + H(+). The protein operates within isoprenoid biosynthesis; isopentenyl diphosphate biosynthesis via DXP pathway; isopentenyl diphosphate from 1-deoxy-D-xylulose 5-phosphate: step 3/6. Its function is as follows. Catalyzes the phosphorylation of the position 2 hydroxy group of 4-diphosphocytidyl-2C-methyl-D-erythritol. This chain is 4-diphosphocytidyl-2-C-methyl-D-erythritol kinase, found in Saccharophagus degradans (strain 2-40 / ATCC 43961 / DSM 17024).